A 42-amino-acid chain; its full sequence is Photosystem II reaction center protein J (42 aa).

The helical transmembrane segment at 10 to 30 threads the bilayer; that stretch reads IPLWLIGTVVGSLAIGLLAIF.

It belongs to the PsbJ family. As to quaternary structure, PSII is composed of 1 copy each of membrane proteins PsbA, PsbB, PsbC, PsbD, PsbE, PsbF, PsbH, PsbI, PsbJ, PsbK, PsbL, PsbM, PsbT, PsbX, PsbY, PsbZ, Psb30/Ycf12, at least 3 peripheral proteins of the oxygen-evolving complex and a large number of cofactors. It forms dimeric complexes.

Its subcellular location is the plastid. The protein resides in the chloroplast thylakoid membrane. Its function is as follows. One of the components of the core complex of photosystem II (PSII). PSII is a light-driven water:plastoquinone oxidoreductase that uses light energy to abstract electrons from H(2)O, generating O(2) and a proton gradient subsequently used for ATP formation. It consists of a core antenna complex that captures photons, and an electron transfer chain that converts photonic excitation into a charge separation. In Stigeoclonium helveticum (Green alga), this protein is Photosystem II reaction center protein J.